Reading from the N-terminus, the 370-residue chain is Aldo-keto reductase dtxS3 (370 aa).

An NADP(+)-binding site is contributed by Asp-78. The active-site Proton donor is Tyr-83. Substrate is bound at residue His-174. Residues 204-205, Gln-230, 259-269, and 333-341 each bind NADP(+); these read SS, GPLASGRLARR, and GSVGRIEEA.

It belongs to the aldo/keto reductase family.

It functions in the pathway secondary metabolite biosynthesis. In terms of biological role, aldo-keto reductase; part of the gene cluster that mediates the biosynthesis of destruxins, insecticidal cyclic hexadepsipeptides which induce flaccid paralysis and visceral muscle contraction in insects through targeting the calcium channels and vacuolar-type ATPases. The aldo-keto reductase dtxS3 converts alpha-ketoisocaproic acid from deaminated leucine into alpha-hydroxyisocaproic acid (HIC), which is the first substrate for destruxin assembly by dtxS1. L-aspartate decarboxylase dtxS4 converts aspartic acid into beta-alanine, the last substrate for the destruxin assembly line performed by dtxS1. The nonribosomal peptide synthetase dtxS1 synthesizes destruxins B and B2, whereas the cytochrome P450 monooxygenase dtxS2 is required to convert destruxin B into other destruxin derivatives, including destructins C, D, A and E. Destruxin E-diol (ED) is further produced in a non-enzymatic manner from destruxin E. Destruxins play an important role in virulence and escape from insect host immune defenses. This Metarhizium robertsii (strain ARSEF 23 / ATCC MYA-3075) (Metarhizium anisopliae (strain ARSEF 23)) protein is Aldo-keto reductase dtxS3.